A 428-amino-acid chain; its full sequence is C4-dicarboxylate transport protein (428 aa).

A run of 9 helical transmembrane segments spans residues 8–28 (SLYF…HFYP), 44–64 (LIKM…IAGM), 76–96 (VALL…LVIV), 142–162 (IGAF…LFGF), 184–204 (VIFG…FGAM), 222–242 (LIVC…GSIA), 289–309 (VVGL…SIYL), 326–346 (IFHQ…AAGV), and 352–372 (IVLA…LALI).

Belongs to the dicarboxylate/amino acid:cation symporter (DAACS) (TC 2.A.23) family.

It is found in the cell inner membrane. Responsible for the transport of dicarboxylates such as succinate, fumarate, and malate from the periplasm across the membrane. The protein is C4-dicarboxylate transport protein of Cronobacter sakazakii (strain ATCC BAA-894) (Enterobacter sakazakii).